A 61-amino-acid chain; its full sequence is Small ribosomal subunit protein uS14 (61 aa).

Residues Cys-24, Cys-27, Cys-40, and Cys-43 each contribute to the Zn(2+) site.

It belongs to the universal ribosomal protein uS14 family. Zinc-binding uS14 subfamily. Part of the 30S ribosomal subunit. Contacts proteins S3 and S10. The cofactor is Zn(2+).

Functionally, binds 16S rRNA, required for the assembly of 30S particles and may also be responsible for determining the conformation of the 16S rRNA at the A site. The chain is Small ribosomal subunit protein uS14 from Mycoplasmoides gallisepticum (strain R(low / passage 15 / clone 2)) (Mycoplasma gallisepticum).